The chain runs to 179 residues: CDP-archaeol synthase (179 aa).

The next 4 membrane-spanning stretches (helical) occupy residues 53–73 (FVGG…IEKL), 88–108 (FTLT…GSFI), 120–140 (FLIV…SLYP), and 145–165 (LFTA…HMGI).

It belongs to the CDP-archaeol synthase family. Mg(2+) serves as cofactor.

It localises to the cell membrane. It catalyses the reaction 2,3-bis-O-(geranylgeranyl)-sn-glycerol 1-phosphate + CTP + H(+) = CDP-2,3-bis-O-(geranylgeranyl)-sn-glycerol + diphosphate. It participates in membrane lipid metabolism; glycerophospholipid metabolism. In terms of biological role, catalyzes the formation of CDP-2,3-bis-(O-geranylgeranyl)-sn-glycerol (CDP-archaeol) from 2,3-bis-(O-geranylgeranyl)-sn-glycerol 1-phosphate (DGGGP) and CTP. This reaction is the third ether-bond-formation step in the biosynthesis of archaeal membrane lipids. Can use CTP or dCTP, but not ATP, GTP or TTP. The chain is CDP-archaeol synthase from Archaeoglobus fulgidus (strain ATCC 49558 / DSM 4304 / JCM 9628 / NBRC 100126 / VC-16).